The chain runs to 315 residues: ADP/ATP translocase (315 aa).

Over 1 to 13 (MSNKQETKILGMP) the chain is Mitochondrial intermembrane. Solcar repeat units follow at residues 13 to 106 (PPFV…FKAM) and 118 to 210 (KWMA…IKPV). Residues 14–37 (PFVVDFLMGGVSAAVSKTAAAPIE) traverse the membrane as a helical segment. Lysine 30 serves as a coordination point for bongkrekate. Over 38–80 (RIKLLVQNQDEMIKAGRLDRRYNGIIDCFRRTTADEGLMALWR) the chain is Mitochondrial matrix. A cardiolipin is bound by residues isoleucine 62 and 81 to 83 (GNT). Residues 81–104 (GNTANVIRYFPTQALNFAFRDKFK) form a helical membrane-spanning segment. An ADP-binding site is contributed by arginine 88. Residues 88-89 (RY) and asparagine 96 contribute to the bongkrekate site. The Mitochondrial intermembrane segment spans residues 105–115 (AMFGYKKDKDG). Residues 116–145 (YAKWMAGNLASGGAAGATSLLFVYSLDYAR) form a helical membrane-spanning segment. At 146–184 (TRLANDAKSAKGGGARQFNGLIDVYRKTLASDGIAGLYR) the chain is on the mitochondrial matrix side. Residues leucine 166 and 184–185 (RG) each bind a cardiolipin. A helical transmembrane segment spans residues 185–213 (GFGPSVAGIVVYRGLYFGMYDSIKPVVLV). 196–197 (YR) lines the bongkrekate pocket. Residues 214-216 (GPL) lie on the Mitochondrial intermembrane side of the membrane. A helical membrane pass occupies residues 217–242 (ANNFLASFLLGWCVTTGAGIASYPLD). The stretch at 218 to 304 (NNFLASFLLG…LSIYDQLQIL (87 aa)) is one Solcar repeat. The Mitochondrial matrix segment spans residues 243–283 (TVRRRMMMTSGEAVKYKSSIDAFRQIIAKEGVKSLFKGAGA). Arginine 245 is an ADP binding site. Residues 245–250 (RRRMMM) carry the Nucleotide carrier signature motif motif. A cardiolipin-binding positions include 260–261 (SS) and 280–282 (GAG). Residues 284-304 (NILRGVAGAGVLSIYDQLQIL) form a helical membrane-spanning segment. At 305–315 (LFGKAFKGGSG) the chain is on the mitochondrial intermembrane side.

The protein belongs to the mitochondrial carrier (TC 2.A.29) family. Monomer.

The protein localises to the mitochondrion inner membrane. It catalyses the reaction ADP(in) + ATP(out) = ADP(out) + ATP(in). Its activity is regulated as follows. The matrix-open state (m-state) is inhibited by the membrane-permeable bongkrekic acid (BKA). The cytoplasmic-open state (c-state) is inhibited by the membrane-impermeable toxic inhibitor carboxyatractyloside (CATR). In terms of biological role, ADP:ATP antiporter that mediates import of ADP into the mitochondrial matrix for ATP synthesis, and export of ATP out to fuel the cell. Cycles between the cytoplasmic-open state (c-state) and the matrix-open state (m-state): operates by the alternating access mechanism with a single substrate-binding site intermittently exposed to either the cytosolic (c-state) or matrix (m-state) side of the inner mitochondrial membrane. This is ADP/ATP translocase from Thermothelomyces thermophilus (strain ATCC 42464 / BCRC 31852 / DSM 1799) (Sporotrichum thermophile).